A 720-amino-acid chain; its full sequence is DNA replication licensing factor mcm7 (720 aa).

The C4-type zinc-finger motif lies at 183 to 210; the sequence is CDQCGAETYQPIQSPTFMPLIMCPSREC. The MCM domain maps to 331-537; that stretch reads FYEKLAASIA…NDLRLAQHIT (207 aa). Positions 344, 383, 385, 386, 387, 488, 513, and 603 each coordinate ATP. An Arginine finger motif is present at residues 512 to 515; it reads SRFD.

This sequence belongs to the MCM family. In terms of assembly, component of the mcm2-7 complex (RLF-M). The complex forms a toroidal hexameric ring with the proposed subunit order mcm2-mcm6-mcm4-mcm7-mcm3-mcm5. The heterodimer of mmcm3/mcm5 interacts with mcm4, mmcm6, mcm7 and weakly with mcm2. The N-terminus is required for interaction with mmcm3, though this interaction may not be direct, and remains in a complex with mmcm3 throughout the cell cycle. Begins to associate with zmcm6 at the neurula stage. Component of the replisome complex. Component of the CMG helicase complex, composed of the mcm2-7 complex, the GINS complex and cdc45. Post-translationally, ubiquitinated by traip when forks converge following formation of DNA interstrand cross-links. Short ubiquitin chains on mcm7 promote recruitment of DNA glycosylase neil3. If the interstrand cross-link cannot be cleaved by neil3, the ubiquitin chains continue to grow on mcm7, promoting the unloading of the CMG helicase complex by the vcp/p97 ATPase.

It is found in the nucleus. It localises to the chromosome. It catalyses the reaction ATP + H2O = ADP + phosphate + H(+). Acts as a component of the mcm2-7 complex (mcm complex) which is the putative replicative helicase essential for 'once per cell cycle' DNA replication initiation and elongation in eukaryotic cells. The active ATPase sites in the mcm2-7 ring are formed through the interaction surfaces of two neighboring subunits such that a critical structure of a conserved arginine finger motif is provided in trans relative to the ATP-binding site of the Walker A box of the adjacent subunit. The six ATPase active sites, however, are likely to contribute differentially to the complex helicase activity. The existence of maternal and zygotic forms of mcm3 and mcm6 suggests that specific forms of mcm2-7 complexes may be used during different stages of development. In Xenopus tropicalis (Western clawed frog), this protein is DNA replication licensing factor mcm7.